Reading from the N-terminus, the 92-residue chain is Probable acyl carrier protein (92 aa).

Residues glutamine 11–valine 92 enclose the Carrier domain. An O-(pantetheine 4'-phosphoryl)serine modification is found at serine 49.

In terms of processing, 4'-phosphopantetheine is transferred from CoA to a specific serine of the apo-ACP-like protein.

Its function is as follows. Involved in developmentally regulated synthesis of a compound biosynthetically related to polyketide antibiotics which is essential for spore color in Streptomyces halstedii. In Streptomyces halstedii, this protein is Probable acyl carrier protein (sch3).